Reading from the N-terminus, the 159-residue chain is MKLQVPRSSLKRSIFHKKRKELLSSLPKIEAKAVARYIRISPRKARAIANTIRGKSVEEAFQILAFSPKKAARIMEKVLKSAVANAENNFGLSVENLYVSECYVNDGPRMKRIWPRGRGRADIIQKRMSHITVVVRDRSKEDEYRKALEELEKKISSEE.

The protein belongs to the universal ribosomal protein uL22 family. As to quaternary structure, part of the 50S ribosomal subunit.

In terms of biological role, this protein binds specifically to 23S rRNA; its binding is stimulated by other ribosomal proteins, e.g. L4, L17, and L20. It is important during the early stages of 50S assembly. It makes multiple contacts with different domains of the 23S rRNA in the assembled 50S subunit and ribosome. Its function is as follows. The globular domain of the protein is located near the polypeptide exit tunnel on the outside of the subunit, while an extended beta-hairpin is found that lines the wall of the exit tunnel in the center of the 70S ribosome. This is Large ribosomal subunit protein uL22 from Thermotoga sp. (strain RQ2).